Reading from the N-terminus, the 102-residue chain is Small ribosomal subunit protein uS10 (102 aa).

The protein belongs to the universal ribosomal protein uS10 family. In terms of assembly, part of the 30S ribosomal subunit.

Functionally, involved in the binding of tRNA to the ribosomes. The polypeptide is Small ribosomal subunit protein uS10 (Phenylobacterium zucineum (strain HLK1)).